Here is a 361-residue protein sequence, read N- to C-terminus: S-adenosylmethionine:tRNA ribosyltransferase-isomerase (361 aa).

It belongs to the QueA family. In terms of assembly, monomer.

The protein localises to the cytoplasm. It carries out the reaction 7-aminomethyl-7-carbaguanosine(34) in tRNA + S-adenosyl-L-methionine = epoxyqueuosine(34) in tRNA + adenine + L-methionine + 2 H(+). Its pathway is tRNA modification; tRNA-queuosine biosynthesis. Functionally, transfers and isomerizes the ribose moiety from AdoMet to the 7-aminomethyl group of 7-deazaguanine (preQ1-tRNA) to give epoxyqueuosine (oQ-tRNA). This is S-adenosylmethionine:tRNA ribosyltransferase-isomerase from Haemophilus ducreyi (strain 35000HP / ATCC 700724).